The following is a 702-amino-acid chain: MGIQGLLPQLKPIQNPVSLRRYEGEVLAIDGYAWLHRAACSCAYELAMGKPTDKYLQFFIKRFSLLKTFKVEPYLVFDGDAIPVKKSTESKRRDKRKENKAIAERLWACGEKKNAMDYFQKCVDITPEMAKCIICYCKLNGIRYIVAPFEADSQMVYLEQKNIVQGIISEDSDLLVFGCRRLITKLNDYGECLEICRDNFIKLPKKFPLGSLTNEEIITMVCLSGCDYTNGIPKVGLITAMKLVRRFNTIERIILSIQREGKLMIPDTYINEYEAAVLAFQFQRVFCPIRKKIVSLNEIPLYLKDTESKRKRLYACIGFVIHRETQKKQIVHFDDDIDHHLHLKIAQGDLNPYDFHQPLANREHKLQLASKSNIEFGKTNTTNSEAKVKPIESFFQKMTKLDHNPKVANNIHSLRQAEDKLTMAIKRRKLSNANVVQETLKDTRSKFFNKPSMTVVENFKEKGDSIQDFKEDTNSQSLEEPVSESQLSTQIPSSFITTNLEDDDNLSEEVSEVVSDIEEDRKNSEGKTIGNEIYNTDDDGDGDTSEDYSETAESRVPTSSTTSFPGSSQRSISGCTKVLQKFRYSSSFSGVNANRQPLFPRHVNQKSRGMVYVNQNRDDDCDDNDGKNQITQRPSLRKSLIGARSQRIVIDMKSVDERKSFNSSPILHEESKKRDIETTKSSQARPAVRSISLLSQFVYKGK.

The interval 1–96 is N-domain; the sequence is MGIQGLLPQL…STESKRRDKR (96 aa). D30, D78, E150, D152, D171, D173, and D227 together coordinate Mg(2+). Positions 114–247 are I-domain; that stretch reads NAMDYFQKCV…ITAMKLVRRF (134 aa). At S372 the chain carries Phosphoserine. Disordered stretches follow at residues 465–571 and 660–685; these read SIQD…SQRS and SFNS…SQAR. Residues 474 to 498 are compositionally biased toward polar residues; sequence NSQSLEEPVSESQLSTQIPSSFITT. Acidic residues-rich tracts occupy residues 500–518 and 535–550; these read LEDD…SDIE and NTDD…DYSE. The segment covering 558 to 571 has biased composition (low complexity); it reads TSSTTSFPGSSQRS. Residues 667–678 are compositionally biased toward basic and acidic residues; the sequence is LHEESKKRDIET.

Belongs to the XPG/RAD2 endonuclease family. EXO1 subfamily. As to quaternary structure, interacts with mismatch repair protein MSH2. The cofactor is Mg(2+).

The protein resides in the nucleus. Inactivated by calcium and zinc ions. Functionally, 5'-&gt;3' double-stranded DNA exonuclease involved in mismatch repair and eventually also in mitotic recombination between direct repeats. Also has a minor role in the correction of large DNA mismatches that occur in the heteroduplex DNA during meiotic recombination at the HIS4 locus. The protein is Exodeoxyribonuclease 1 (EXO1) of Saccharomyces cerevisiae (strain ATCC 204508 / S288c) (Baker's yeast).